We begin with the raw amino-acid sequence, 623 residues long: Quinoprotein ethanol dehydrogenase (623 aa).

A signal peptide spans 1-34 (MTIRSLPAALSPLSMAVQAVLLVSSLALAPAANA). Positions 45 and 51 each coordinate Ca(2+). Residue E95 participates in pyrroloquinoline quinone binding. C139 and C140 are joined by a disulfide. Residues R145, T189, and 207 to 209 (HGS) contribute to the pyrroloquinoline quinone site. Residue E213 participates in Ca(2+) binding. The segment at 242-279 (GRLNGKDSTPTGDVKAPSWPDDPTTETGKVESWSHGGG) is disordered. Ca(2+) contacts are provided by N300 and D350. The active-site Proton acceptor is the D350. R378 contacts pyrroloquinoline quinone. Residues 414-436 (RPVENEGQRPAKPLPGETKGKPV) form a disordered region. WD repeat units lie at residues 515–556 (EHNE…ELWK) and 559–601 (TGSG…LTKP). The pyrroloquinoline quinone site is built by W523 and A587.

The protein belongs to the bacterial PQQ dehydrogenase family. Homodimer. Pyrroloquinoline quinone is required as a cofactor. The cofactor is Ca(2+).

It localises to the periplasm. It carries out the reaction a primary alcohol + 2 Fe(III)-[cytochrome c] = an aldehyde + 2 Fe(II)-[cytochrome c] + 2 H(+). It catalyses the reaction ethanol + 2 Fe(III)-[cytochrome c] = acetaldehyde + 2 Fe(II)-[cytochrome c] + 2 H(+). The catalysed reaction is ethanol + A = acetaldehyde + AH2. The enzyme catalyses 1-propanol + 2 Fe(III)-[cytochrome c] = propanal + 2 Fe(II)-[cytochrome c] + 2 H(+). Its pathway is alcohol metabolism; ethanol degradation; acetate from ethanol: step 1/2. Its activity is regulated as follows. Enhanced by the presence of ethylamine or NH4(+) ions. Catalyzes the oxidation of ethanol and other primary alcohols to the corresponding aldehydes, except methanol, which is not a substrate. Uses a specific inducible cytochrome c550, encoded by the adjacent gene in the locus, as electron acceptor. Is a key enzyme of the carbon and energy metabolism during growth of P.putida on ethanol as the sole carbon and energy source. Displays lower activity on secondary alcohols, aldehydes and diols. Is not active with sugar alcohols such as glycerol and D-sorbitol. In vitro, reacts well with phenazine methosulfate (PMS) as an electron acceptor but not with NAD(P), potassium ferricyanide, or molecular oxygen. This chain is Quinoprotein ethanol dehydrogenase, found in Pseudomonas putida (Arthrobacter siderocapsulatus).